The following is a 276-amino-acid chain: Ribosomal RNA small subunit methyltransferase A (276 aa).

Asn-15, Leu-17, Gly-42, Glu-63, Asp-88, and Asn-111 together coordinate S-adenosyl-L-methionine.

This sequence belongs to the class I-like SAM-binding methyltransferase superfamily. rRNA adenine N(6)-methyltransferase family. RsmA subfamily.

The protein localises to the cytoplasm. It carries out the reaction adenosine(1518)/adenosine(1519) in 16S rRNA + 4 S-adenosyl-L-methionine = N(6)-dimethyladenosine(1518)/N(6)-dimethyladenosine(1519) in 16S rRNA + 4 S-adenosyl-L-homocysteine + 4 H(+). Its function is as follows. Specifically dimethylates two adjacent adenosines (A1518 and A1519) in the loop of a conserved hairpin near the 3'-end of 16S rRNA in the 30S particle. May play a critical role in biogenesis of 30S subunits. The chain is Ribosomal RNA small subunit methyltransferase A from Geobacter sulfurreducens (strain ATCC 51573 / DSM 12127 / PCA).